The following is a 1040-amino-acid chain: Multidrug resistance protein MdtB (1040 aa).

12 helical membrane passes run 16-36 (FIMR…AGII), 342-362 (DTQF…YVFL), 369-389 (IIPA…MVFL), 396-416 (LTLM…IVVI), 440-460 (IGFT…PLLF), 472-492 (FAVT…TLTP), 537-557 (WATL…WIVI), 869-889 (LIVA…ESFI), 890-910 (HPVT…LALM), 911-931 (LSGS…IGIV), 968-988 (ILMT…STGV), and 998-1018 (IGMV…TPVI).

It belongs to the resistance-nodulation-cell division (RND) (TC 2.A.6) family. MdtB subfamily. In terms of assembly, part of a tripartite efflux system composed of MdtA, MdtB and MdtC. MdtB forms a heteromultimer with MdtC.

It localises to the cell inner membrane. In Enterobacter sp. (strain 638), this protein is Multidrug resistance protein MdtB.